The chain runs to 346 residues: Probable dual-specificity RNA methyltransferase RlmN (346 aa).

Glutamate 92 serves as the catalytic Proton acceptor. One can recognise a Radical SAM core domain in the interval 98 to 332 (TDQRLTVCVS…VSLRASRGLD (235 aa)). The cysteines at positions 105 and 337 are disulfide-linked. 3 residues coordinate [4Fe-4S] cluster: cysteine 112, cysteine 116, and cysteine 119. Residues 159 to 160 (GE), serine 189, 218 to 220 (SLH), and asparagine 294 contribute to the S-adenosyl-L-methionine site. Cysteine 337 functions as the S-methylcysteine intermediate in the catalytic mechanism.

It belongs to the radical SAM superfamily. RlmN family. It depends on [4Fe-4S] cluster as a cofactor.

The protein localises to the cytoplasm. It catalyses the reaction adenosine(2503) in 23S rRNA + 2 reduced [2Fe-2S]-[ferredoxin] + 2 S-adenosyl-L-methionine = 2-methyladenosine(2503) in 23S rRNA + 5'-deoxyadenosine + L-methionine + 2 oxidized [2Fe-2S]-[ferredoxin] + S-adenosyl-L-homocysteine. The enzyme catalyses adenosine(37) in tRNA + 2 reduced [2Fe-2S]-[ferredoxin] + 2 S-adenosyl-L-methionine = 2-methyladenosine(37) in tRNA + 5'-deoxyadenosine + L-methionine + 2 oxidized [2Fe-2S]-[ferredoxin] + S-adenosyl-L-homocysteine. Specifically methylates position 2 of adenine 2503 in 23S rRNA and position 2 of adenine 37 in tRNAs. This is Probable dual-specificity RNA methyltransferase RlmN from Synechococcus sp. (strain CC9311).